Reading from the N-terminus, the 449-residue chain is Xylose isomerase (449 aa).

Active-site residues include histidine 103 and aspartate 106. Mg(2+) contacts are provided by glutamate 234, glutamate 270, histidine 273, aspartate 298, aspartate 309, aspartate 311, and aspartate 342.

Belongs to the xylose isomerase family. As to quaternary structure, homotetramer. Requires Mg(2+) as cofactor.

It localises to the cytoplasm. It catalyses the reaction alpha-D-xylose = alpha-D-xylulofuranose. This chain is Xylose isomerase, found in Levilactobacillus brevis (Lactobacillus brevis).